A 357-amino-acid polypeptide reads, in one-letter code: MTQPVQTIDVLLAEHADLERRLSDPDLHSNPDEARKAGRRFARLAPIVGTYRKLMAAREDLETARELAADDDSFTAEVADLESRVAQLDTQLTDMLAPRDPHDADDIVLEVKSGEGGEESALFAADLARMYIRYAERHGWTVTVLDEITSDLGGYKDATLSIRSKGDSADGVWSRMKFEGGVHRVQRVPVTESQGRVHTSAAGVLVYPEPEEVAEVQIDESDLRIDVFRSSGKGGQGVNTTDSAVRITHLPTGVVVTCQNERSQLQNKARALQVLAARLQAMAEEQASAEASADRASQIRTVDRSERIRTYNFPENRITDHRIGFKAHNLDQVLDGDLDALFDALAAADKQSRLQQA.

Position 236 is an N5-methylglutamine (glutamine 236).

This sequence belongs to the prokaryotic/mitochondrial release factor family. In terms of processing, methylated by PrmC. Methylation increases the termination efficiency of RF1.

The protein resides in the cytoplasm. Its function is as follows. Peptide chain release factor 1 directs the termination of translation in response to the peptide chain termination codons UAG and UAA. The sequence is that of Peptide chain release factor 1 from Mycolicibacterium paratuberculosis (strain ATCC BAA-968 / K-10) (Mycobacterium paratuberculosis).